A 450-amino-acid polypeptide reads, in one-letter code: 23S rRNA (uracil(1939)-C(5))-methyltransferase RlmD (450 aa).

The 59-residue stretch at 12 to 70 (SKQLSAKLSLSVNQLDHLGAGIAQHQGKVVFIPGALPDETVTVQFTEQKKNYARAKLIK) folds into the TRAM domain. [4Fe-4S] cluster is bound by residues cysteine 83, cysteine 89, cysteine 92, and cysteine 171. 6 residues coordinate S-adenosyl-L-methionine: glutamine 283, phenylalanine 312, asparagine 317, glutamate 333, aspartate 360, and aspartate 380. Cysteine 406 serves as the catalytic Nucleophile.

It belongs to the class I-like SAM-binding methyltransferase superfamily. RNA M5U methyltransferase family. RlmD subfamily.

The enzyme catalyses uridine(1939) in 23S rRNA + S-adenosyl-L-methionine = 5-methyluridine(1939) in 23S rRNA + S-adenosyl-L-homocysteine + H(+). In terms of biological role, catalyzes the formation of 5-methyl-uridine at position 1939 (m5U1939) in 23S rRNA. This chain is 23S rRNA (uracil(1939)-C(5))-methyltransferase RlmD, found in Shewanella baltica (strain OS155 / ATCC BAA-1091).